The chain runs to 204 residues: MRYTSAALESLIDEFAKLPGVGRKTAQRLAMYILREPRAEAERLAEALLEAKDNVIRCSVCQNITDVGVDPCALCTSKARDRSVICVVESPVDMLAFEKTGHYKGLYHVLHGVISPLDGIGPDDIKVRELLLRFTMPQSPAVREVVLALNPTIEGETTALYLSKLLKPLGIHVTKIARGIPVGAELEFIDEATLSRAMEGRTVV.

The C4-type zinc-finger motif lies at 58-75; it reads CSVCQNITDVGVDPCALC. A Toprim domain is found at 83–181; it reads SVICVVESPV…HVTKIARGIP (99 aa).

This sequence belongs to the RecR family.

Functionally, may play a role in DNA repair. It seems to be involved in an RecBC-independent recombinational process of DNA repair. It may act with RecF and RecO. The protein is Recombination protein RecR of Pelodictyon phaeoclathratiforme (strain DSM 5477 / BU-1).